Consider the following 223-residue polypeptide: MOB-like protein phocein (223 aa).

Zn(2+)-binding residues include C92, C97, C110, H113, C119, H127, H169, and H174.

This sequence belongs to the MOB1/phocein family. As to quaternary structure, part of the core of STRIPAK complexes composed of PP2A catalytic and scaffolding subunits, the striatins (PP2A regulatory subunits), the striatin-associated proteins MOB4, STRIP1 and STRIP2, PDCD10 and members of the STE20 kinases, such as STK24 and STK26.

The protein resides in the cytoplasm. Its subcellular location is the membrane. The protein localises to the golgi apparatus. It localises to the golgi stack membrane. In terms of biological role, part of the striatin-interacting phosphatase and kinase (STRIPAK) complexes. STRIPAK complexes have critical roles in protein (de)phosphorylation and are regulators of multiple signaling pathways including Hippo, MAPK, nuclear receptor and cytoskeleton remodeling. Different types of STRIPAK complexes are involved in a variety of biological processes such as cell growth, differentiation, apoptosis, metabolism and immune regulation. This Gallus gallus (Chicken) protein is MOB-like protein phocein (MOB4).